The following is a 243-amino-acid chain: Terpene cyclase paxB (243 aa).

7 helical membrane passes run 23-43 (FVVG…YISF), 49-69 (GMSI…CLVF), 78-98 (GVFW…ITFS), 112-132 (ISLI…ALAL), 134-154 (IGPA…LSVG), 172-194 (LWAS…WMYW), and 205-225 (LVLW…ICFW).

Belongs to the paxB family.

Its subcellular location is the membrane. It participates in secondary metabolite biosynthesis. Functionally, terpene cyclase; part of the ATM2 gene cluster that mediates the biosynthesis of paxilline, a mycotoxin that acts as an inhibitor of mammalian maxi-K channels. PaxG, the geranylgeranyl diphosphate (GGPP) synthase is proposed to catalyze the first step in paxilline biosynthesis. Condensation of indole-3-glycerol phosphate with GGPP by paxC then forms 3-geranylgeranylindole (3-GGI), followed by epoxidation and cyclization of this intermediate (by paxM and paxB) to form paspaline. Paspaline is subsequently converted to 13-desoxypaxilline by paxP, the latter being then converted to paxilline by paxQ. Finally paxilline can be mono- and di-prenylated by paxD. This is Terpene cyclase paxB from Penicillium paxilli.